The primary structure comprises 81 residues: Spore coat protein F-like protein YraG (81 aa).

This sequence belongs to the CotF family.

The protein localises to the spore coat. This Bacillus subtilis (strain 168) protein is Spore coat protein F-like protein YraG (yraG).